The following is a 427-amino-acid chain: Glutamate-1-semialdehyde 2,1-aminomutase (427 aa).

N6-(pyridoxal phosphate)lysine is present on K265.

This sequence belongs to the class-III pyridoxal-phosphate-dependent aminotransferase family. HemL subfamily. Homodimer. Pyridoxal 5'-phosphate serves as cofactor.

Its subcellular location is the cytoplasm. It carries out the reaction (S)-4-amino-5-oxopentanoate = 5-aminolevulinate. Its pathway is porphyrin-containing compound metabolism; protoporphyrin-IX biosynthesis; 5-aminolevulinate from L-glutamyl-tRNA(Glu): step 2/2. The sequence is that of Glutamate-1-semialdehyde 2,1-aminomutase from Burkholderia mallei (strain NCTC 10229).